Here is a 300-residue protein sequence, read N- to C-terminus: Formate dehydrogenase-O iron-sulfur subunit (300 aa).

The Cytoplasmic portion of the chain corresponds to 1–260 (MAYQSQDIIR…KFWKGIWKPL (260 aa)). 4 consecutive 4Fe-4S ferredoxin-type domains span residues 30–60 (VAKL…DTVG), 91–123 (LEWL…QYAN), 124–153 (GIVD…LNPE), and 158–189 (YKCT…FGTK). The [4Fe-4S] cluster site is built by Cys-39, Cys-42, Cys-45, Cys-49, Cys-100, Cys-103, Cys-108, Cys-112, Cys-133, Cys-136, Cys-139, Cys-143, Cys-160, Cys-163, Cys-175, and Cys-179. Residues 261–279 (AAVGFAATFAASIFHYVGV) form a helical membrane-spanning segment. Residues 280-300 (GPNRADEEENNLHEEKDEERK) lie on the Periplasmic side of the membrane.

As to quaternary structure, formate dehydrogenase is a membrane-bound complex, formed by subunits alpha, beta and gamma. It depends on [4Fe-4S] cluster as a cofactor.

The protein resides in the cell membrane. Allows to use formate as major electron donor during aerobic respiration. The beta chain is an electron transfer unit containing 4 cysteine clusters involved in the formation of iron-sulfur centers. Electrons are transferred from the gamma chain to the molybdenum cofactor of the alpha subunit. This is Formate dehydrogenase-O iron-sulfur subunit (fdoH) from Escherichia coli (strain K12).